A 537-amino-acid chain; its full sequence is Sodium/hydrogen exchanger 9B2 (537 aa).

Positions Met-1–Tyr-10 are enriched in basic and acidic residues. Positions Met-1 to Glu-28 are disordered. Residues Met-1 to Arg-86 lie on the Cytoplasmic side of the membrane. Residues Pro-15–Gln-27 show a composition bias toward polar residues. Phosphoserine is present on Ser-49. A helical transmembrane segment spans residues Val-87–Ile-104. Residues Thr-105–Gly-113 lie on the Extracellular side of the membrane. The helical transmembrane segment at Asn-114–Gly-133 threads the bilayer. Residues Leu-134–Pro-144 are Cytoplasmic-facing. A helical transmembrane segment spans residues Ser-145–Val-161. At Ile-162–Lys-171 the chain is on the extracellular side. A helical membrane pass occupies residues Trp-172–Gly-189. The Cytoplasmic segment spans residues Leu-190–Leu-200. Residues Lys-201–Leu-227 traverse the membrane as a helical segment. Topologically, residues Gly-228–Trp-233 are extracellular. Residues Gly-234–Gly-242 traverse the membrane as a helical segment. The Cytoplasmic segment spans residues Ala-243–Leu-270. Val-244, Gly-275, Asp-278, and Asp-279 together coordinate Na(+). The chain crosses the membrane as a helical span at residues Leu-271–Leu-290. Topologically, residues Gly-291–Val-300 are extracellular. Residues Phe-301–Ile-324 traverse the membrane as a helical segment. Residues Gln-325–Arg-339 lie on the Cytoplasmic side of the membrane. Residues Thr-340–Phe-357 form a helical membrane-spanning segment. The Extracellular portion of the chain corresponds to Gly-358–Gly-361. The chain crosses the membrane as a helical span at residues Ser-362 to Leu-373. Residues Ala-374–Ala-390 lie on the Cytoplasmic side of the membrane. A helical transmembrane segment spans residues Val-391–Ala-411. Residues Ser-412–Thr-417 lie on the Extracellular side of the membrane. The helical transmembrane segment at Val-418 to Val-440 threads the bilayer. Residues Cys-441–Ala-461 lie on the Cytoplasmic side of the membrane. Residues Thr-462–Asp-473 form a helical membrane-spanning segment. The Extracellular portion of the chain corresponds to Thr-474 to Tyr-486. A helical membrane pass occupies residues Gly-487–Ile-509. Residues Gly-510 to Val-537 are Cytoplasmic-facing.

This sequence belongs to the monovalent cation:proton antiporter 1 (CPA1) transporter (TC 2.A.36) family. As to quaternary structure, homodimer. Dimerization is essential for SLC9B2 activity. Lipids seem to play a role in the stabilization of the dimerization subdomain. Widely expressed. High levels detected in the distal tubules of the kidney nephron. Detected in red blood cells (at protein level).

Its subcellular location is the cell membrane. The protein localises to the mitochondrion membrane. The protein resides in the endosome membrane. It is found in the recycling endosome membrane. It localises to the cytoplasmic vesicle. Its subcellular location is the secretory vesicle. The protein localises to the synaptic vesicle membrane. The protein resides in the cell projection. It is found in the cilium. It localises to the flagellum membrane. Its subcellular location is the basolateral cell membrane. The protein localises to the apical cell membrane. It catalyses the reaction Li(+)(out) + H(+)(in) = Li(+)(in) + H(+)(out). It carries out the reaction Li(+)(in) + Na(+)(out) = Li(+)(out) + Na(+)(in). The enzyme catalyses Na(+)(in) + H(+)(out) = Na(+)(out) + H(+)(in). Allosterically inhibited by the N-terminal domain. Inhibited by phloretin. Electroneutral Na(+) Li(+)/H(+) antiporter that extrudes Na(+) or Li(+) in exchange for external protons across the membrane. Uses the proton gradient/membrane potential to extrude sodium. Contributes to the regulation of intracellular pH and sodium homeostasis. Also able to mediate Na(+)/Li(+) antiporter activity in kidney. May play a physiological role in renal tubular function and blood pressure homeostasis. Plays an important role for insulin secretion and clathrin-mediated endocytosis in beta-cells. Involved in sperm motility and fertility. It is controversial whether SLC9B2 plays a role in osteoclast differentiation or not. The protein is Sodium/hydrogen exchanger 9B2 of Homo sapiens (Human).